The sequence spans 220 residues: Deoxyribose-phosphate aldolase (220 aa).

Aspartate 89 acts as the Proton donor/acceptor in catalysis. Residue lysine 151 is the Schiff-base intermediate with acetaldehyde of the active site. The active-site Proton donor/acceptor is the lysine 180.

The protein belongs to the DeoC/FbaB aldolase family. DeoC type 1 subfamily.

It localises to the cytoplasm. The enzyme catalyses 2-deoxy-D-ribose 5-phosphate = D-glyceraldehyde 3-phosphate + acetaldehyde. It functions in the pathway carbohydrate degradation; 2-deoxy-D-ribose 1-phosphate degradation; D-glyceraldehyde 3-phosphate and acetaldehyde from 2-deoxy-alpha-D-ribose 1-phosphate: step 2/2. Functionally, catalyzes a reversible aldol reaction between acetaldehyde and D-glyceraldehyde 3-phosphate to generate 2-deoxy-D-ribose 5-phosphate. This chain is Deoxyribose-phosphate aldolase, found in Streptococcus equi subsp. equi (strain 4047).